The following is a 545-amino-acid chain: CTP synthase (545 aa).

The tract at residues 1–266 (MTTNYIFVTG…DDYICKRFSL (266 aa)) is amidoligase domain. Position 14 (Ser14) interacts with CTP. Residue Ser14 participates in UTP binding. Residues 15-20 (SLGKGI) and Asp72 contribute to the ATP site. Mg(2+) is bound by residues Asp72 and Glu140. CTP-binding positions include 147 to 149 (DIE), 187 to 192 (KTKPTQ), and Lys223. UTP-binding positions include 187–192 (KTKPTQ) and Lys223. Position 239–241 (239–241 (KDV)) interacts with ATP. The Glutamine amidotransferase type-1 domain maps to 291–542 (TIGMVGKYIE…VKAASEYQKR (252 aa)). Gly352 is a binding site for L-glutamine. Cys379 functions as the Nucleophile; for glutamine hydrolysis in the catalytic mechanism. L-glutamine is bound by residues 380–383 (LGMQ), Glu403, and Arg470. Active-site residues include His515 and Glu517.

This sequence belongs to the CTP synthase family. As to quaternary structure, homotetramer.

The catalysed reaction is UTP + L-glutamine + ATP + H2O = CTP + L-glutamate + ADP + phosphate + 2 H(+). The enzyme catalyses L-glutamine + H2O = L-glutamate + NH4(+). It catalyses the reaction UTP + NH4(+) + ATP = CTP + ADP + phosphate + 2 H(+). The protein operates within pyrimidine metabolism; CTP biosynthesis via de novo pathway; CTP from UDP: step 2/2. Allosterically activated by GTP, when glutamine is the substrate; GTP has no effect on the reaction when ammonia is the substrate. The allosteric effector GTP functions by stabilizing the protein conformation that binds the tetrahedral intermediate(s) formed during glutamine hydrolysis. Inhibited by the product CTP, via allosteric rather than competitive inhibition. Catalyzes the ATP-dependent amination of UTP to CTP with either L-glutamine or ammonia as the source of nitrogen. Regulates intracellular CTP levels through interactions with the four ribonucleotide triphosphates. The protein is CTP synthase of Klebsiella pneumoniae subsp. pneumoniae (strain ATCC 700721 / MGH 78578).